An 807-amino-acid chain; its full sequence is Mechanosensitive cation channel TMEM63A (807 aa).

Topologically, residues 1–51 (MMDSPFLELWQSKAVSIREQLGLGDRPNDSYCYNSAKNSTVLQGVTFGGIP) are extracellular. N38 is a glycosylation site (N-linked (GlcNAc...) asparagine). The chain crosses the membrane as a helical span at residues 52-74 (TVLLIDVSCFLFLILVFSIIRRR). Topologically, residues 75–134 (FWDYGRIALVSEADSESRFQRLSSTSSSGQQDFENELGCCPWLTAIFRLHDDQILEWCGE) are cytoplasmic. A helical transmembrane segment spans residues 135–167 (DAIHYLSFQRHIIFLLVVVSFLSLCVILPVNLS). The Extracellular portion of the chain corresponds to 168-191 (GDLLDKDPYSFGRTTIANLQTDND). A helical transmembrane segment spans residues 192–217 (LLWLHTIFAVIYLFLTVGFMRHHTQS). Residues 218–416 (IKYKEENLVR…CWKNLSIQGL (199 aa)) lie on the Cytoplasmic side of the membrane. The interval 219 to 414 (KYKEENLVRR…DICWKNLSIQ (196 aa)) is intracellular linker IL2; confers mechanosensitivity. Residues 417 to 444 (RWWLQWLGINFTLFLGLFFLTTPSIILS) traverse the membrane as a helical segment. Over 445-462 (TMDKFNVTKPIHALNNPI) the chain is Extracellular. A glycan (N-linked (GlcNAc...) asparagine) is linked at N450. Residues 463–490 (ISQFFPTLLLWSFSALLPSIVYYSTLLE) traverse the membrane as a helical segment. Topologically, residues 491 to 495 (SHWTK) are cytoplasmic. A helical transmembrane segment spans residues 496–532 (SGENQIMMTKVYIFLIFMVLILPSLGLTSLDFFFRWL). Residues 533-554 (FDKTSSEASIRLECVFLPDQGA) are Extracellular-facing. Residues 555–586 (FFVNYVIASAFIGNGMELLRLPGLILYTFRMI) form a helical membrane-spanning segment. Residues 555–586 (FFVNYVIASAFIGNGMELLRLPGLILYTFRMI) are gating helix. Over 587-606 (MAKTAADRRNVKQNQAFQYE) the chain is Cytoplasmic. A helical membrane pass occupies residues 607–624 (FGAMYAWMLCVFTVIVAY). The Extracellular portion of the chain corresponds to 625-628 (SITC). Residues 629-651 (PIIAPFGLIYILLKHMVDRHNLY) traverse the membrane as a helical segment. Topologically, residues 652 to 661 (FVYLPAKLEK) are cytoplasmic. The chain crosses the membrane as a helical span at residues 662–689 (GIHFAAVNQALAAPILCLFWLYFFSFLR). Topologically, residues 690 to 694 (LGMKA) are extracellular. Residues 695-709 (PATLFTFLVLLLTIL) traverse the membrane as a helical segment. Topologically, residues 710 to 807 (VCLAHTCFGC…GSVAAAPQEA (98 aa)) are cytoplasmic. S739 carries the post-translational modification Phosphoserine.

This sequence belongs to the CSC1 (TC 1.A.17) family. Monomer. In terms of processing, N-Glycosylated.

It is found in the lysosome membrane. The protein localises to the early endosome membrane. The protein resides in the cell membrane. The enzyme catalyses Ca(2+)(in) = Ca(2+)(out). Its function is as follows. Mechanosensitive cation channel with low conductance and high activation threshold. In contrast to TMEM63B, does not show phospholipid scramblase activity. Acts as a regulator of lysosomal morphology by mediating lysosomal mechanosensitivity. Important for the baby's first breath and respiration throughout life. Upon lung inflation conducts cation currents in alveolar type 1 and 2 cells triggering lamellar body exocytosis and surfactant secretion into airspace. Also acts as an osmosensitive cation channel preferentially activated by hypotonic stress. This Homo sapiens (Human) protein is Mechanosensitive cation channel TMEM63A.